The following is a 757-amino-acid chain: RNA-directed RNA polymerase catalytic subunit (757 aa).

The disordered stretch occupies residues 56–78 (TTNTETGAHQLNPIDGPLPEDNE). 2 short sequence motifs (nuclear localization signal) span residues 187 to 195 (RKRRVRDNM) and 203 to 216 (RTIGKKKQRLNKRS). Residues 249 to 256 (RGFVYFVE) form a promoter-binding site region. Residues 286 to 483 (VRKMMTNSQD…GINMSKKKSY (198 aa)) enclose the RdRp catalytic domain.

The protein belongs to the influenza viruses polymerase PB1 family. As to quaternary structure, influenza RNA polymerase is composed of three subunits: PB1, PB2 and PA. Interacts (via N-terminus) with PA (via C-terminus). Interacts (via C-terminus) with PB2 (via N-terminus); this interaction is essential for transcription initiation. In terms of processing, phosphorylated by host PRKCA.

It localises to the host nucleus. The protein localises to the host cytoplasm. The catalysed reaction is RNA(n) + a ribonucleoside 5'-triphosphate = RNA(n+1) + diphosphate. RNA-dependent RNA polymerase which is responsible for replication and transcription of virus RNA segments. The transcription of viral mRNAs occurs by a unique mechanism called cap-snatching. 5' methylated caps of cellular mRNAs are cleaved after 10-13 nucleotides by PA. In turn, these short capped RNAs are used as primers by PB1 for transcription of viral mRNAs. During virus replication, PB1 initiates RNA synthesis and copy vRNA into complementary RNA (cRNA) which in turn serves as a template for the production of more vRNAs. The sequence is that of RNA-directed RNA polymerase catalytic subunit from Aves (Human).